The chain runs to 186 residues: MSNTKHADVSKFLSYVLRHKPEAIGLTLNSGGWANIAELISCAAKDGRLLTREVIQSVVDNSDKKRFSISADGLSIRAAQGHSSAQVDMRYEPKVPPEFLYHGTATRFIDSINQQGLRPGSRQYVHLSADEATAITVGQRHGKPTVLKIKTLEMHQQGFIFYQADNGVWLTLTVPVPFIDSTPFID.

The protein belongs to the KptA/TPT1 family.

In terms of biological role, removes the 2'-phosphate from RNA via an intermediate in which the phosphate is ADP-ribosylated by NAD followed by a presumed transesterification to release the RNA and generate ADP-ribose 1''-2''-cyclic phosphate (APPR&gt;P). May function as an ADP-ribosylase. This chain is Probable RNA 2'-phosphotransferase, found in Pectobacterium carotovorum subsp. carotovorum (strain PC1).